The sequence spans 357 residues: DNA primase small subunit PriS (357 aa).

Active-site residues include aspartate 105, aspartate 107, and aspartate 259.

This sequence belongs to the eukaryotic-type primase small subunit family. In terms of assembly, heterodimer of a small subunit (PriS) and a large subunit (PriL). The cofactor is Mg(2+). Mn(2+) serves as cofactor.

Catalytic subunit of DNA primase, an RNA polymerase that catalyzes the synthesis of short RNA molecules used as primers for DNA polymerase during DNA replication. The small subunit contains the primase catalytic core and has DNA synthesis activity on its own. Binding to the large subunit stabilizes and modulates the activity, increasing the rate of DNA synthesis while decreasing the length of the DNA fragments, and conferring RNA synthesis capability. The DNA polymerase activity may enable DNA primase to also catalyze primer extension after primer synthesis. May also play a role in DNA repair. The sequence is that of DNA primase small subunit PriS from Methanococcus maripaludis (strain C6 / ATCC BAA-1332).